Reading from the N-terminus, the 73-residue chain is N-terminal-borealin-like protein (73 aa).

Belongs to the borealin family. In terms of assembly, component of the aurora kinase complex composed of at least BIR1, BNL1, IPL1 and SLI15.

It localises to the nucleus. The protein resides in the cytoplasm. It is found in the cytoskeleton. The protein localises to the spindle. Functionally, component of the aurora kinase complex, also called chromosomal passenger complex (CPC), essential for chromosome segregation and metaphase chromosome alignment. Mediates the SLI15-BIR1 interaction within the CPC. In Saccharomyces cerevisiae (strain ATCC 204508 / S288c) (Baker's yeast), this protein is N-terminal-borealin-like protein (NBL1).